The chain runs to 316 residues: Bifunctional peptidase and (3S)-lysyl hydroxylase JMJD7 (316 aa).

In terms of domain architecture, JmjC spans 128–307 (VQKQCSNLPS…LKYSYFQLLD (180 aa)). Residues His-178, Asp-180, and His-277 each contribute to the Fe cation site.

As to quaternary structure, homodimer; disulfide-linked. Interacts with DRG1 and DRG2. It depends on Fe(2+) as a cofactor.

The protein resides in the nucleus. It localises to the cytoplasm. The enzyme catalyses L-lysyl-[protein] + 2-oxoglutarate + O2 = (3S)-3-hydroxy-L-lysyl-[protein] + succinate + CO2. Functionally, bifunctional enzyme that acts both as an endopeptidase and 2-oxoglutarate-dependent monooxygenase. Endopeptidase that cleaves histones N-terminal tails at the carboxyl side of methylated arginine or lysine residues, to generate 'tailless nucleosomes', which may trigger transcription elongation. Preferentially recognizes and cleaves monomethylated and dimethylated arginine residues of histones H2, H3 and H4. After initial cleavage, continues to digest histones tails via its aminopeptidase activity. Additionally, may play a role in protein biosynthesis by modifying the translation machinery. Acts as a Fe(2+) and 2-oxoglutarate-dependent monooxygenase, catalyzing (S)-stereospecific hydroxylation at C-3 of 'Lys-22' of DRG1 and 'Lys-21' of DRG2 translation factors (TRAFAC), promoting their interaction with ribonucleic acids (RNA). In Homo sapiens (Human), this protein is Bifunctional peptidase and (3S)-lysyl hydroxylase JMJD7.